The sequence spans 216 residues: Co-chaperone protein SBA1 (216 aa).

S2 carries the N-acetylserine modification. The CS domain occupies 5 to 108; it reads VINPQVAWAQ…LESEYWPRLT (104 aa). 2 consecutive repeats follow at residues 141–156 and 160–174; these read AQGM…AGGA and GGMD…AGGA. The segment at 169–216 is disordered; that stretch reads GGAGGAGSPDMAQLQQLLAQSGGNLDMGDFKENDEEDEEEEIEPEVKA. Positions 200 to 216 are enriched in acidic residues; sequence ENDEEDEEEEIEPEVKA.

The protein belongs to the p23/wos2 family. In terms of assembly, interacts with HSP82.

Acts as a co-chaperone. The polypeptide is Co-chaperone protein SBA1 (SBA1) (Saccharomyces cerevisiae (strain ATCC 204508 / S288c) (Baker's yeast)).